A 213-amino-acid chain; its full sequence is 3,4-dihydroxy-2-butanone 4-phosphate synthase (213 aa).

Residues 37 to 38 (RE), Asp42, 150 to 154 (RPGHT), and Glu174 each bind D-ribulose 5-phosphate. Glu38 serves as a coordination point for Mg(2+). His153 contributes to the Mg(2+) binding site.

The protein belongs to the DHBP synthase family. Homodimer. The cofactor is Mg(2+). Mn(2+) is required as a cofactor.

It catalyses the reaction D-ribulose 5-phosphate = (2S)-2-hydroxy-3-oxobutyl phosphate + formate + H(+). It participates in cofactor biosynthesis; riboflavin biosynthesis; 2-hydroxy-3-oxobutyl phosphate from D-ribulose 5-phosphate: step 1/1. Its function is as follows. Catalyzes the conversion of D-ribulose 5-phosphate to formate and 3,4-dihydroxy-2-butanone 4-phosphate. The protein is 3,4-dihydroxy-2-butanone 4-phosphate synthase of Clostridium botulinum (strain Langeland / NCTC 10281 / Type F).